Consider the following 234-residue polypeptide: tRNA (guanine-N(1)-)-methyltransferase (234 aa).

S-adenosyl-L-methionine-binding positions include Gly115 and 135–140; that span reads VGDYIL.

It belongs to the RNA methyltransferase TrmD family. Homodimer.

It localises to the cytoplasm. The enzyme catalyses guanosine(37) in tRNA + S-adenosyl-L-methionine = N(1)-methylguanosine(37) in tRNA + S-adenosyl-L-homocysteine + H(+). Specifically methylates guanosine-37 in various tRNAs. In Rickettsia akari (strain Hartford), this protein is tRNA (guanine-N(1)-)-methyltransferase.